Consider the following 1167-residue polypeptide: RNA-directed RNA polymerase (1167 aa).

The 183-residue stretch at 553 to 735 folds into the RdRp catalytic domain; it reads LTYGILAEAT…KALASYTGLE (183 aa).

This sequence belongs to the reoviridae RNA-directed RNA polymerase family. As to quaternary structure, interacts with VP3 (Potential). Interacts with VP2 (Potential). Interacts with NSP5; this interaction is probably necessary for the formation of functional virus factories.

Its subcellular location is the virion. The catalysed reaction is RNA(n) + a ribonucleoside 5'-triphosphate = RNA(n+1) + diphosphate. RNA-directed RNA polymerase that is involved in both transcription and genome replication. Together with VP3 capping enzyme, forms an enzyme complex positioned near the channels situated at each of the five-fold vertices of the core. Following infection, the outermost layer of the virus is lost, leaving a double-layered particle (DLP) made up of the core and VP6 shell. VP1 then catalyzes the transcription of fully conservative plus-strand genomic RNAs that are extruded through the DLP's channels into the cytoplasm where they function as mRNAs for translation of viral proteins. One copy of each of the viral (+)RNAs is also recruited during core assembly, together with newly synthesized polymerase complexes and VP2. The polymerase of these novo-formed particles catalyzes the synthesis of complementary minus-strands leading to dsDNA formation. To do so, the polymerase specifically recognizes conserved 3' sequence(s) in plus-strand RNA templates. Once dsRNA synthesis is complete, the polymerase switches to the transcriptional mode, thus providing secondary transcription. This chain is RNA-directed RNA polymerase, found in Rotavirus X (strain RVX/Human/China/NADRV-J19/1997/GXP[X]) (RV ADRV-N).